An 885-amino-acid chain; its full sequence is DNA polymerase eta (885 aa).

Residues 18–274 (VLLVDMDCFF…LPVGKIKGLG (257 aa)) form the UmuC domain. Residues aspartate 22 and methionine 23 each contribute to the Mg(2+) site. Residues aspartate 22 and methionine 23 each coordinate Mn(2+). An a 2'-deoxyribonucleoside 5'-triphosphate-binding site is contributed by arginine 70. Mg(2+)-binding residues include aspartate 125 and glutamate 126. 2 residues coordinate Mn(2+): aspartate 125 and glutamate 126. Residue glutamate 126 is part of the active site. Disordered stretches follow at residues 599–653 (AIEA…DLYV) and 658–677 (VPPT…RKFD). Over residues 608–618 (FEEDTEEETEL) the composition is skewed to acidic residues. The span at 628-649 (EGQSSDAGQEQDPNTLNDSTGN) shows a compositional bias: polar residues. The segment at 701 to 737 (DILPTIKCDQCGANIPDEVKSLQTHRDHHFAQELSRT) adopts a UBZ3-type 1 zinc-finger fold. Zn(2+) is bound by residues cysteine 708, cysteine 711, histidine 725, and histidine 729. A disordered region spans residues 722 to 783 (LQTHRDHHFA…YSTAPPSNSI (62 aa)). Basic and acidic residues predominate over residues 739–748 (RSTEREERTQ). The segment covering 766 to 780 (TAGSGSSSYSTAPPS) has biased composition (low complexity). The segment at 798-832 (SDPQMNQCPECKAFIKCVDMPEHLDYHVARNLQRE) adopts a UBZ3-type 2 zinc-finger fold. The Zn(2+) site is built by cysteine 805, cysteine 808, histidine 820, and histidine 824. The segment at 846-870 (NKEKISPVQPKKQSQKKLNSTISAS) is disordered.

This sequence belongs to the DNA polymerase type-Y family. In terms of assembly, interacts (via C-terminus) with nopo. Requires Mg(2+) as cofactor. The cofactor is Mn(2+). Post-translationally, ubiquitination enhanced by nopo. Expressed in ovaries and testes.

The protein localises to the nucleus. It catalyses the reaction DNA(n) + a 2'-deoxyribonucleoside 5'-triphosphate = DNA(n+1) + diphosphate. The enzyme in complex with the DNA substrate binds a third divalent metal cation. This binding is essential for catalyzing the DNA synthesis. In terms of biological role, DNA polymerase specifically involved in the DNA repair by translesion synthesis (TLS). Plays an important role in translesion synthesis, where the normal high-fidelity DNA polymerases cannot proceed and DNA synthesis stalls. Inserts one or 2 nucleotide(s) opposite the lesion. During homologous recombination (HR) repair, has a overlapping role with the error-prone translesion polymerase PolZ1/DNApol-zeta to initiate repair synthesis that is completed by end joining or another polymerase that can bind and reinitiate synthesis. Particularly important for the repair of UV-induced pyrimidine dimers and for hydroxyurea (HU)-induced DNA damage. Although inserts the correct base, may cause base transitions and transversions depending upon the context. Forms a Schiff base with 5'-deoxyribose phosphate at abasic sites, but does not have any lyase activity, preventing the release of the 5'-deoxyribose phosphate (5'-dRP) residue. This covalent trapping of the enzyme by the 5'-dRP residue inhibits its DNA synthetic activity during base excision repair, thereby avoiding high incidence of mutagenesis. In Drosophila melanogaster (Fruit fly), this protein is DNA polymerase eta.